The primary structure comprises 870 residues: Leucine--tRNA ligase (870 aa).

The short motif at P43–H53 is the 'HIGH' region element. The 'KMSKS' region motif lies at K630–S634. Residue K633 coordinates ATP.

This sequence belongs to the class-I aminoacyl-tRNA synthetase family.

Its subcellular location is the cytoplasm. The catalysed reaction is tRNA(Leu) + L-leucine + ATP = L-leucyl-tRNA(Leu) + AMP + diphosphate. In Parvibaculum lavamentivorans (strain DS-1 / DSM 13023 / NCIMB 13966), this protein is Leucine--tRNA ligase.